Reading from the N-terminus, the 485-residue chain is NGFI-A-binding protein 1 (485 aa).

The interval 4-82 is NCD1; it reads ALPRTLGELQ…RDWVTNPGLF (79 aa). Glycyl lysine isopeptide (Lys-Gly) (interchain with G-Cter in SUMO2) cross-links involve residues K126, K129, and K143. The segment at 160 to 187 is disordered; sequence WQGHHATESEHSLSPADVGSPASPKESS. Residues S171 and S182 each carry the phosphoserine modification. A Glycyl lysine isopeptide (Lys-Gly) (interchain with G-Cter in SUMO2) cross-link involves residue K211. The NCD2 stretch occupies residues 220–309; the sequence is LLKNNKKLAK…ARQVSREVTY (90 aa). Residues 306-337 form a necessary for nuclear localization region; it reads EVTYKYTYRTTRLKCGERDELSPKRIKVEDGF. S327 is subject to Phosphoserine. Residue K332 forms a Glycyl lysine isopeptide (Lys-Gly) (interchain with G-Cter in SUMO1); alternate linkage. K332 is covalently cross-linked (Glycyl lysine isopeptide (Lys-Gly) (interchain with G-Cter in SUMO2); alternate). Glycyl lysine isopeptide (Lys-Gly) (interchain with G-Cter in SUMO2) cross-links involve residues K354, K368, and K372. The disordered stretch occupies residues 398–432; that stretch reads RQSSGEHSPDGLPSDGSDGQGERPLNLRMPNVQNR. S405 is subject to Phosphoserine. Residues K452, K463, and K475 each participate in a glycyl lysine isopeptide (Lys-Gly) (interchain with G-Cter in SUMO2) cross-link. K478 is covalently cross-linked (Glycyl lysine isopeptide (Lys-Gly) (interchain with G-Cter in SUMO1); alternate). K478 is covalently cross-linked (Glycyl lysine isopeptide (Lys-Gly) (interchain with G-Cter in SUMO2); alternate).

It belongs to the NAB family. Homomultimers may associate with EGR1 bound to DNA.

It is found in the nucleus. Acts as a transcriptional repressor for zinc finger transcription factors EGR1 and EGR2. The protein is NGFI-A-binding protein 1 (NAB1) of Mesocricetus auratus (Golden hamster).